A 464-amino-acid chain; its full sequence is MLCHITRPDSVVLEVEVDPKANGEDILNKICQKMGIIEVDYFGLQFTGTKGESLWMNLRNRICQEVDCVSPCRLRLRVKFFVEPHLILQEQTRHLFLMHVKEEIIKGSLRLDAEQAIELCALLAQAEFGDYKQNTAKYCYSQIYGQDPSHDTINTISLKHKSLEGVSQASAEYQALQLVSSLTYYGVEWHFARDSEGQQLLIGVGQEGLFVCKSDFTPIERLMYPVIQMATQSGRNVYVTITKDNGDSVVLLFKFVSPSAANGLYRAITEIHAFYRCDTVMSTVKMQYSRDFKGHLASLFLNESIDLGKRYIFDIQRTSKEVYDRTRRALFNAGVSVNGRGISRSLLRQTKVDREERMCVDCRETHVLKEKLQRLQEALTCALCCEQEISAAFCPCGHMFCCYNCASQLQCCPVCRSEVDRVQHVYLPTCASLLGLAEAKTTNSVLRRTGISEDCANKENARQM.

In terms of domain architecture, FERM spans 1 to 279 (MLCHITRPDS…EIHAFYRCDT (279 aa)). An RING-type zinc finger spans residues 381 to 416 (CALCCEQEISAAFCPCGHMFCCYNCASQLQCCPVCR).

Interacts with anxa5.

Its subcellular location is the cytoplasm. The protein resides in the cytosol. It catalyses the reaction S-ubiquitinyl-[E2 ubiquitin-conjugating enzyme]-L-cysteine + [acceptor protein]-L-lysine = [E2 ubiquitin-conjugating enzyme]-L-cysteine + N(6)-ubiquitinyl-[acceptor protein]-L-lysine.. The protein operates within protein modification; protein ubiquitination. In terms of biological role, E3 ubiquitin-protein ligase that mediates ubiquitination and subsequent proteasomal degradation of myosin regulatory light chain (MRLC). Regulates cell movements during gastrulation by acting downstream of fz7 to antagonize the frizzled-signaling pathway. In Danio rerio (Zebrafish), this protein is E3 ubiquitin-protein ligase MYLIP-B.